The sequence spans 313 residues: Acetaldehyde dehydrogenase 1 (313 aa).

16-19 contributes to the NAD(+) binding site; that stretch reads SGNI. Cysteine 131 (acyl-thioester intermediate) is an active-site residue. NAD(+) contacts are provided by residues 162 to 170 and asparagine 281; that span reads SAGPGTRAN.

The protein belongs to the acetaldehyde dehydrogenase family.

The catalysed reaction is acetaldehyde + NAD(+) + CoA = acetyl-CoA + NADH + H(+). The polypeptide is Acetaldehyde dehydrogenase 1 (Mycobacterium sp. (strain JLS)).